Reading from the N-terminus, the 705-residue chain is Polyribonucleotide nucleotidyltransferase (705 aa).

2 residues coordinate Mg(2+): Asp-486 and Asp-492. The 60-residue stretch at 553-612 (PRIHTIRINPDKIKDVIGKGGSVIRALTEETGTTIEIEDDGTVKIAATDGEKAKFAIRRI) folds into the KH domain. The region spanning 622-690 (GRIYQGKVTR…RQGRVRLSIK (69 aa)) is the S1 motif domain.

This sequence belongs to the polyribonucleotide nucleotidyltransferase family. As to quaternary structure, component of the RNA degradosome, which is a multiprotein complex involved in RNA processing and mRNA degradation. The cofactor is Mg(2+).

The protein localises to the cytoplasm. It carries out the reaction RNA(n+1) + phosphate = RNA(n) + a ribonucleoside 5'-diphosphate. In terms of biological role, involved in mRNA degradation. Catalyzes the phosphorolysis of single-stranded polyribonucleotides processively in the 3'- to 5'-direction. This is Polyribonucleotide nucleotidyltransferase from Serratia proteamaculans (strain 568).